The primary structure comprises 397 residues: Argininosuccinate synthase (397 aa).

9-17 (AYSGGLDTS) lines the ATP pocket. Tyrosine 85 provides a ligand contact to L-citrulline. ATP is bound at residue glycine 115. The L-aspartate site is built by threonine 117, asparagine 121, and aspartate 122. Asparagine 121 contacts L-citrulline. Positions 125, 173, 258, and 270 each coordinate L-citrulline.

Belongs to the argininosuccinate synthase family. Type 1 subfamily. Homotetramer.

It is found in the cytoplasm. The catalysed reaction is L-citrulline + L-aspartate + ATP = 2-(N(omega)-L-arginino)succinate + AMP + diphosphate + H(+). It functions in the pathway amino-acid biosynthesis; L-arginine biosynthesis; L-arginine from L-ornithine and carbamoyl phosphate: step 2/3. This Streptococcus suis (strain 05ZYH33) protein is Argininosuccinate synthase.